We begin with the raw amino-acid sequence, 348 residues long: D-amino-acid oxidase (348 aa).

The FAD site is built by Ala15, Ile18, Lys40, Ser52, Gly56, and Asn58. 2 residues coordinate (R)-lactate: Tyr232 and Arg295. Residues Tyr232 and Arg295 each contribute to the anthranilate site. Residues Arg295, Ser323, Gly326, Tyr327, and Gln328 each contribute to the FAD site.

Belongs to the DAMOX/DASOX family. Requires FAD as cofactor.

It is found in the peroxisome. It carries out the reaction a D-alpha-amino acid + O2 + H2O = a 2-oxocarboxylate + H2O2 + NH4(+). The catalysed reaction is D-serine + O2 + H2O = 3-hydroxypyruvate + H2O2 + NH4(+). The enzyme catalyses D-alanine + O2 + H2O = pyruvate + H2O2 + NH4(+). It catalyses the reaction D-arginine + O2 + H2O = 5-guanidino-2-oxopentanoate + H2O2 + NH4(+). In terms of biological role, catalyzes the oxidative deamination of D-amino acids with broad substrate specificity. Enables the organism to utilize D-amino acids as a source of nutrients. The sequence is that of D-amino-acid oxidase from Schizosaccharomyces pombe (strain 972 / ATCC 24843) (Fission yeast).